Reading from the N-terminus, the 391-residue chain is F-box/kelch-repeat protein At3g16740 (391 aa).

The 47-residue stretch at 1-47 (MVQISDLPRDLTEEVLSRIPVTSMRAVRFTCKKWNTLSKDRSFTKKH) folds into the F-box domain. 2 Kelch repeats span residues 104 to 154 (KIFH…YEEK) and 163 to 215 (ILRF…LKGN).

Part of a SCF (ASK-cullin-F-box) protein ligase complex. Interacts with ASK11.

The protein resides in the nucleus. The protein operates within protein modification; protein ubiquitination. Its function is as follows. Component of SCF(ASK-cullin-F-box) E3 ubiquitin ligase complexes, which may mediate the ubiquitination and subsequent proteasomal degradation of target proteins. This is F-box/kelch-repeat protein At3g16740 from Arabidopsis thaliana (Mouse-ear cress).